The sequence spans 401 residues: uncharacterized protein (401 aa).

The [4Fe-4S] cluster site is built by Cys7, Cys13, Cys16, and Cys94. Positions 230, 259, 280, and 328 each coordinate S-adenosyl-L-methionine. The active-site Nucleophile is the Cys355.

The protein belongs to the class I-like SAM-binding methyltransferase superfamily. RNA M5U methyltransferase family.

This is an uncharacterized protein from Chlamydia pneumoniae (Chlamydophila pneumoniae).